Reading from the N-terminus, the 349-residue chain is Magnesium-protoporphyrin IX monomethyl ester [oxidative] cyclase (349 aa).

Positions 1 to 10 (MTATTATAPA) are enriched in low complexity. Positions 1 to 23 (MTATTATAPAMRGGGRNELPPHL) are disordered.

This sequence belongs to the AcsF family. Fe cation serves as cofactor.

It catalyses the reaction Mg-protoporphyrin IX 13-monomethyl ester + 3 NADPH + 3 O2 + 2 H(+) = 3,8-divinyl protochlorophyllide a + 3 NADP(+) + 5 H2O. It participates in porphyrin-containing compound metabolism; chlorophyll biosynthesis (light-independent). Catalyzes the formation of the isocyclic ring in chlorophyll biosynthesis. Mediates the cyclase reaction, which results in the formation of divinylprotochlorophyllide (Pchlide) characteristic of all chlorophylls from magnesium-protoporphyrin IX 13-monomethyl ester (MgPMME). The chain is Magnesium-protoporphyrin IX monomethyl ester [oxidative] cyclase from Prochlorococcus marinus (strain MIT 9303).